A 153-amino-acid chain; its full sequence is MPLKFWKRLMPPKKKSSETLTLLSNQEPLSMQDPPLVRSSTRSSIYPPVIKKGEHRAKTKRNQELAEQLLKELPHETTSIANLVQRNNRDLDYNLEQLVRTLLQMEKEGTHVTESLINTLMETDTLTPKEQALIWPAYNLVRQMMHHAALHHI.

The tract at residues 16–42 (SSETLTLLSNQEPLSMQDPPLVRSSTR) is disordered. Over residues 18–29 (ETLTLLSNQEPL) the composition is skewed to polar residues.

The sequence is that of Protein C (P/V/C) from Tupaia paramyxovirus (TPMV).